The chain runs to 107 residues: Nucleoid-associated protein RBE_0048 (107 aa).

Belongs to the YbaB/EbfC family. As to quaternary structure, homodimer.

It is found in the cytoplasm. The protein resides in the nucleoid. Its function is as follows. Binds to DNA and alters its conformation. May be involved in regulation of gene expression, nucleoid organization and DNA protection. In Rickettsia bellii (strain RML369-C), this protein is Nucleoid-associated protein RBE_0048.